A 260-amino-acid chain; its full sequence is Lipid II isoglutaminyl synthase (glutamine-hydrolyzing) subunit GatD (260 aa).

Residues 16-214 (QLNIAHLYGN…FHGPILSRNA (199 aa)) form the GATase cobBQ-type domain. Catalysis depends on Cys107, which acts as the Nucleophile. Arg142 serves as a coordination point for substrate. Residue His206 is part of the active site.

This sequence belongs to the CobB/CobQ family. GatD subfamily. As to quaternary structure, forms a heterodimer with MurT.

It catalyses the reaction beta-D-GlcNAc-(1-&gt;4)-Mur2Ac(oyl-L-Ala-gamma-D-Glu-L-Lys-D-Ala-D-Ala)-di-trans,octa-cis-undecaprenyl diphosphate + L-glutamine + ATP + H2O = beta-D-GlcNAc-(1-&gt;4)-Mur2Ac(oyl-L-Ala-D-isoglutaminyl-L-Lys-D-Ala-D-Ala)-di-trans,octa-cis-undecaprenyl diphosphate + L-glutamate + ADP + phosphate + H(+). The catalysed reaction is L-glutamine + H2O = L-glutamate + NH4(+). Its pathway is cell wall biogenesis; peptidoglycan biosynthesis. In terms of biological role, the lipid II isoglutaminyl synthase complex catalyzes the formation of alpha-D-isoglutamine in the cell wall lipid II stem peptide. The GatD subunit catalyzes the hydrolysis of glutamine to glutamate and ammonia. The resulting ammonia molecule is channeled to the active site of MurT. The protein is Lipid II isoglutaminyl synthase (glutamine-hydrolyzing) subunit GatD of Streptococcus pneumoniae (strain ATCC BAA-255 / R6).